We begin with the raw amino-acid sequence, 1157 residues long: ATP-dependent helicase/deoxyribonuclease subunit B (1157 aa).

In terms of domain architecture, UvrD-like helicase ATP-binding spans 1-275; it reads MTLHAYLGRA…QYFNQLYRFN (275 aa). 8-15 contributes to the ATP binding site; that stretch reads GRAGTGKS. Positions 269 to 583 constitute a UvrD-like helicase C-terminal domain; the sequence is NQLYRFNNQD…SIGTMDLAKV (315 aa). 4 residues coordinate [4Fe-4S] cluster: C784, C1112, C1115, and C1121.

This sequence belongs to the helicase family. AddB/RexB type 1 subfamily. Heterodimer of AddA and AddB. The cofactor is Mg(2+). [4Fe-4S] cluster is required as a cofactor.

Functionally, the heterodimer acts as both an ATP-dependent DNA helicase and an ATP-dependent, dual-direction single-stranded exonuclease. Recognizes the chi site generating a DNA molecule suitable for the initiation of homologous recombination. The AddB subunit has 5' -&gt; 3' nuclease activity but not helicase activity. This chain is ATP-dependent helicase/deoxyribonuclease subunit B, found in Staphylococcus aureus (strain JH9).